The sequence spans 451 residues: tRNA modification GTPase MnmE (451 aa).

Residues arginine 28, glutamate 85, and lysine 124 each coordinate (6S)-5-formyl-5,6,7,8-tetrahydrofolate. One can recognise a TrmE-type G domain in the interval 220–373; it reads GLYTVLVGPP…LKTRLRTLLL (154 aa). Asparagine 230 provides a ligand contact to K(+). GTP contacts are provided by residues 230-235, 249-255, and 274-277; these read NVGKSS, TDVPGTT, and DTAG. A Mg(2+)-binding site is contributed by serine 234. K(+) is bound by residues threonine 249, valine 251, and threonine 254. Threonine 255 lines the Mg(2+) pocket. Residue lysine 451 coordinates (6S)-5-formyl-5,6,7,8-tetrahydrofolate.

This sequence belongs to the TRAFAC class TrmE-Era-EngA-EngB-Septin-like GTPase superfamily. TrmE GTPase family. Homodimer. Heterotetramer of two MnmE and two MnmG subunits. Requires K(+) as cofactor.

The protein localises to the cytoplasm. Exhibits a very high intrinsic GTPase hydrolysis rate. Involved in the addition of a carboxymethylaminomethyl (cmnm) group at the wobble position (U34) of certain tRNAs, forming tRNA-cmnm(5)s(2)U34. In Xylella fastidiosa (strain Temecula1 / ATCC 700964), this protein is tRNA modification GTPase MnmE.